The sequence spans 448 residues: Tryptophan dimethylallyltransferase 2 (448 aa).

Residues 80–81 and Glu-89 contribute to the L-tryptophan site; that span reads IL. Residues Arg-100, Lys-186, and Tyr-188 each coordinate substrate. L-tryptophan contacts are provided by Tyr-190 and Arg-249. Substrate is bound by residues Arg-262, Lys-264, Tyr-266, Gln-348, Tyr-350, Tyr-414, and Tyr-418.

The protein belongs to the tryptophan dimethylallyltransferase family. As to quaternary structure, homodimer.

It carries out the reaction L-tryptophan + dimethylallyl diphosphate = 4-(3-methylbut-2-enyl)-L-tryptophan + diphosphate. The protein operates within alkaloid biosynthesis; ergot alkaloid biosynthesis. Functionally, catalyzes the first step of ergot alkaloid biosynthesis. Ergot alkaloids, which are produced by endophyte fungi, can enhance plant host fitness, but also cause livestock toxicosis to host plants. The sequence is that of Tryptophan dimethylallyltransferase 2 (dmaW2) from Claviceps purpurea (strain 20.1) (Ergot fungus).